The primary structure comprises 642 residues: Threonine--tRNA ligase (642 aa).

Residues 1-61 (MPVITLPDGS…DTDSELSIIT (61 aa)) form the TGS domain. A catalytic region spans residues 243–534 (DHRKIGKQLD…LIEEYAGKFP (292 aa)). Zn(2+) is bound by residues C334, H385, and H511.

The protein belongs to the class-II aminoacyl-tRNA synthetase family. Homodimer. Zn(2+) serves as cofactor.

It is found in the cytoplasm. It carries out the reaction tRNA(Thr) + L-threonine + ATP = L-threonyl-tRNA(Thr) + AMP + diphosphate + H(+). Its function is as follows. Catalyzes the attachment of threonine to tRNA(Thr) in a two-step reaction: L-threonine is first activated by ATP to form Thr-AMP and then transferred to the acceptor end of tRNA(Thr). Also edits incorrectly charged L-seryl-tRNA(Thr). The sequence is that of Threonine--tRNA ligase from Shewanella piezotolerans (strain WP3 / JCM 13877).